A 467-amino-acid polypeptide reads, in one-letter code: Transcription factor CRF1 (467 aa).

Residues 1 to 10 (MLLSAPVNST) are compositionally biased toward polar residues. Disordered stretches follow at residues 1–42 (MLLS…VVLS), 62–110 (DFES…SSKT), 151–170 (SKSE…TNED), and 341–361 (TYRD…DRKR). Residues 11–23 (VRRKPHSPNKKKP) show a composition bias toward basic residues. Positions 28 to 42 (TAASFSSSSSTVVLS) are enriched in low complexity. Basic and acidic residues predominate over residues 89–102 (YSREENTNEVEEKT).

In terms of assembly, interacts with FHL1 to form a repressor complex. The formation of the CRF1-FHL1 complex is inhibited by the TOR pathway. Phosphorylated by CDC28 and YAK1.

The protein resides in the cytoplasm. The protein localises to the nucleus. Transcription factor, corepressor with FHL1 of ribosomal protein genes. May be involved in the blocking of the spread of silencing. The protein is Transcription factor CRF1 (CRF1) of Saccharomyces cerevisiae (strain ATCC 204508 / S288c) (Baker's yeast).